Here is a 351-residue protein sequence, read N- to C-terminus: MASITLKDLVKSYGDTEVLHHIDGEINDGEFIVIVGPSGCGKSTLLRMIAGLETVTSGDIKICDRVVNDLEPANRDIAMVFQNYALYPHMSVRENMGYGLKIRGNSKADINRRVEEAAEILEIGQYLDRKPRQLSGGQRQRVAMGRAIVRDPQVFLFDEPLSNLDAKLRVQMRLEIRKLQQRLGVTSIYVTHDQVEAMTLGDRLMVLNGGYVEQFGTPIELYDRPATLFVAGFIGSPSMNFLPAEIDAGMVTLENGARLAGGGSAAGKVTLGLRPEHLVADDNGPVEVNVQLCEQLGAITLLHGHLNGTDTECVASMPGHVTAAPGTLMRFSIAPENLHMFDPQTGKRVAE.

Residues 4–234 form the ABC transporter domain; sequence ITLKDLVKSY…PATLFVAGFI (231 aa). Position 36 to 43 (36 to 43) interacts with ATP; it reads GPSGCGKS.

It belongs to the ABC transporter superfamily. sn-glycerol-3-phosphate importer (TC 3.A.1.1.3) family. As to quaternary structure, the complex is composed of two ATP-binding proteins (UgpC), two transmembrane proteins (UgpA and UgpE) and a solute-binding protein (UgpB).

The protein resides in the cell inner membrane. It carries out the reaction sn-glycerol 3-phosphate(out) + ATP + H2O = sn-glycerol 3-phosphate(in) + ADP + phosphate + H(+). Part of the ABC transporter complex UgpBAEC involved in sn-glycerol-3-phosphate (G3P) import. Responsible for energy coupling to the transport system. This chain is sn-glycerol-3-phosphate import ATP-binding protein UgpC, found in Ruegeria sp. (strain TM1040) (Silicibacter sp.).